The primary structure comprises 294 residues: ATP phosphoribosyltransferase (294 aa).

Belongs to the ATP phosphoribosyltransferase family. Long subfamily. The cofactor is Mg(2+).

It localises to the cytoplasm. It catalyses the reaction 1-(5-phospho-beta-D-ribosyl)-ATP + diphosphate = 5-phospho-alpha-D-ribose 1-diphosphate + ATP. It functions in the pathway amino-acid biosynthesis; L-histidine biosynthesis; L-histidine from 5-phospho-alpha-D-ribose 1-diphosphate: step 1/9. Its activity is regulated as follows. Feedback inhibited by histidine. Catalyzes the condensation of ATP and 5-phosphoribose 1-diphosphate to form N'-(5'-phosphoribosyl)-ATP (PR-ATP). Has a crucial role in the pathway because the rate of histidine biosynthesis seems to be controlled primarily by regulation of HisG enzymatic activity. The protein is ATP phosphoribosyltransferase of Chlorobaculum parvum (strain DSM 263 / NCIMB 8327) (Chlorobium vibrioforme subsp. thiosulfatophilum).